We begin with the raw amino-acid sequence, 525 residues long: Glutamate--cysteine ligase (525 aa).

This sequence belongs to the glutamate--cysteine ligase type 1 family. Type 1 subfamily.

It carries out the reaction L-cysteine + L-glutamate + ATP = gamma-L-glutamyl-L-cysteine + ADP + phosphate + H(+). Its pathway is sulfur metabolism; glutathione biosynthesis; glutathione from L-cysteine and L-glutamate: step 1/2. In Alcanivorax borkumensis (strain ATCC 700651 / DSM 11573 / NCIMB 13689 / SK2), this protein is Glutamate--cysteine ligase.